The sequence spans 90 residues: DNA-binding protein HU (90 aa).

The protein belongs to the bacterial histone-like protein family. Homodimer.

Functionally, histone-like DNA-binding protein which is capable of wrapping DNA to stabilize it, and thus to prevent its denaturation under extreme environmental conditions. This is DNA-binding protein HU (hup) from Haemophilus influenzae (strain ATCC 51907 / DSM 11121 / KW20 / Rd).